The following is a 263-amino-acid chain: 3-methyl-2-oxobutanoate hydroxymethyltransferase (263 aa).

2 residues coordinate Mg(2+): Asp45 and Asp84. 3-methyl-2-oxobutanoate is bound by residues 45–46 (DS), Asp84, and Lys112. Glu114 contacts Mg(2+). Glu180 (proton acceptor) is an active-site residue.

This sequence belongs to the PanB family. In terms of assembly, homodecamer; pentamer of dimers. It depends on Mg(2+) as a cofactor.

The protein localises to the cytoplasm. The catalysed reaction is 3-methyl-2-oxobutanoate + (6R)-5,10-methylene-5,6,7,8-tetrahydrofolate + H2O = 2-dehydropantoate + (6S)-5,6,7,8-tetrahydrofolate. The protein operates within cofactor biosynthesis; (R)-pantothenate biosynthesis; (R)-pantoate from 3-methyl-2-oxobutanoate: step 1/2. Functionally, catalyzes the reversible reaction in which hydroxymethyl group from 5,10-methylenetetrahydrofolate is transferred onto alpha-ketoisovalerate to form ketopantoate. In Klebsiella pneumoniae (strain 342), this protein is 3-methyl-2-oxobutanoate hydroxymethyltransferase.